The sequence spans 532 residues: Developmental and secondary metabolism regulator ve1 (532 aa).

The 195-residue stretch at 26–220 folds into the Velvet domain; it reads NRSLWYQLTV…ADQGCRVRIR (195 aa). Positions 40-45 match the Nuclear localization signal motif; the sequence is ERARAC. Residues 217–229 show a composition bias toward basic residues; the sequence is VRIRRDVRMRKRD. Disordered stretches follow at residues 217–440 and 458–520; these read VRIR…TEPS and PQVD…RADG. Positions 233–250 are enriched in low complexity; sequence GGNNNNNNNAGNNAGNNG. Composition is skewed to basic and acidic residues over residues 251-260 and 283-294; these read FERREEDFGR and SEHRASYSDVSR. Positions 302-317 are enriched in pro residues; it reads YPPPPPPPPSYDPTPS. Residues 397 to 411 show a composition bias toward low complexity; it reads STSTYVPPSPSVYST. Residues 435–463 are PEST; it reads MNTEPSRGSIKISALVEPMPVIEPQVDPL. Polar residues predominate over residues 481–493; that stretch reads FAQNTRPLFNGQR.

The protein belongs to the velvet family. VeA subfamily. As to quaternary structure, component of the heterotrimeric velvet complex composed of laeA, ve1 and velB; Ve1 acting as a bridging protein between laeA and velB. Interacts directly with laeA and velB.

The protein localises to the nucleus. It is found in the cytoplasm. In terms of biological role, component of the velvet transcription factor complex that controls sexual/asexual developmental ratio in response to light, promoting sexual development in the darkness while stimulating asexual sporulation under illumination. The velvet complex hat acts as a global regulator for secondary metabolite gene expression. Controls the expression of the aurofusarin and trichothecene gene clusters. Also controls the expression of the deoxynivalenol (DON) gene cluster. Regulates hyphal growth and pigment formation. Acts as a positive regulator of virulence. The protein is Developmental and secondary metabolism regulator ve1 of Gibberella zeae (strain ATCC MYA-4620 / CBS 123657 / FGSC 9075 / NRRL 31084 / PH-1) (Wheat head blight fungus).